A 202-amino-acid chain; its full sequence is ATP-dependent Clp protease proteolytic subunit (202 aa).

Residue Ser101 is the Nucleophile of the active site. Residue His126 is part of the active site.

The protein belongs to the peptidase S14 family. In terms of assembly, component of the chloroplastic Clp protease core complex.

It localises to the plastid. The protein resides in the chloroplast stroma. The catalysed reaction is Hydrolysis of proteins to small peptides in the presence of ATP and magnesium. alpha-casein is the usual test substrate. In the absence of ATP, only oligopeptides shorter than five residues are hydrolyzed (such as succinyl-Leu-Tyr-|-NHMec, and Leu-Tyr-Leu-|-Tyr-Trp, in which cleavage of the -Tyr-|-Leu- and -Tyr-|-Trp bonds also occurs).. Cleaves peptides in various proteins in a process that requires ATP hydrolysis. Has a chymotrypsin-like activity. Plays a major role in the degradation of misfolded proteins. The protein is ATP-dependent Clp protease proteolytic subunit of Acorus calamus (Sweet flag).